The sequence spans 394 residues: GDP-mannose transporter (394 aa).

The Cytoplasmic segment spans residues 1–55; sequence MADKKNEDFVVRMPDNGTVEKEPFLARSPPARARTGSGGGFGDSFSLARVANNPP. The helical transmembrane segment at 56–76 threads the bilayer; the sequence is AAILAYCLSSISMTVVNKYVV. Over 77–80 the chain is Lumenal; that stretch reads SGSE. The helical transmembrane segment at 81 to 101 threads the bilayer; sequence WNLNFFYLAVQAIVCIIAILF. Residues 102–121 are Cytoplasmic-facing; it reads CKQIGIITNLAPFDNVKAKK. The helical transmembrane segment at 122–144 threads the bilayer; the sequence is WFPVSLLLVGMIYTSTKALQFLS. The Lumenal portion of the chain corresponds to 145–149; it reads VPVYT. The chain crosses the membrane as a helical span at residues 150–167; sequence IFKNLTIIAIAYGEVLWF. The Cytoplasmic portion of the chain corresponds to 168–173; it reads GGSVSP. A helical transmembrane segment spans residues 174–198; that stretch reads LALVSFGLMVLSSVVAAWADIQSAI. The Lumenal portion of the chain corresponds to 199-213; it reads HGGSHPSEASTAIST. Residues 214-234 form a helical membrane-spanning segment; sequence LNAGYAWMGMNVFCSAAYLLG. Topologically, residues 235 to 246 are cytoplasmic; the sequence is MRKVIHKMNFKD. Residues 247–267 form a helical membrane-spanning segment; sequence WDSMFYNNLLTIPVLIVCSLI. Over 268-287 the chain is Lumenal; sequence AEDWSAANLARNFPIESRNA. Residues 288–308 traverse the membrane as a helical segment; that stretch reads LFIGMIYSGLGAIFISYCSAW. The Cytoplasmic segment spans residues 309 to 316; that stretch reads CIRVTTST. Residues 317–339 form a helical membrane-spanning segment; that stretch reads TYSMVGALNKLPIAISGLVFFSA. The Lumenal portion of the chain corresponds to 340–342; sequence PVT. A helical transmembrane segment spans residues 343 to 362; sequence FGSVSAIVIGFISGIVYAWA. Residues 363 to 394 lie on the Cytoplasmic side of the membrane; it reads KARQSSQAKSALPTQQPVMSASSQSNKDASNS. The segment at 371 to 394 is disordered; sequence KSALPTQQPVMSASSQSNKDASNS. The segment covering 374-394 has biased composition (polar residues); that stretch reads LPTQQPVMSASSQSNKDASNS.

The protein belongs to the TPT transporter family. SLC35D subfamily. As to quaternary structure, homooligomer.

Its subcellular location is the golgi apparatus membrane. It localises to the cytoplasmic vesicle membrane. The protein localises to the endoplasmic reticulum membrane. Functionally, involved in the import of GDP-mannose from the cytoplasm into the Golgi lumen. This is GDP-mannose transporter (VRG4) from Pyricularia oryzae (strain 70-15 / ATCC MYA-4617 / FGSC 8958) (Rice blast fungus).